We begin with the raw amino-acid sequence, 207 residues long: Thymidylate kinase (207 aa).

7–14 (GCEGSGKS) is an ATP binding site.

Belongs to the thymidylate kinase family.

The enzyme catalyses dTMP + ATP = dTDP + ADP. Its function is as follows. Phosphorylation of dTMP to form dTDP in both de novo and salvage pathways of dTTP synthesis. This Chlamydia felis (strain Fe/C-56) (Chlamydophila felis) protein is Thymidylate kinase.